A 445-amino-acid chain; its full sequence is Phosphoglucosamine mutase (445 aa).

The active-site Phosphoserine intermediate is the serine 99. Residues serine 99, aspartate 242, aspartate 244, and aspartate 246 each coordinate Mg(2+). Position 99 is a phosphoserine (serine 99).

The protein belongs to the phosphohexose mutase family. It depends on Mg(2+) as a cofactor. Post-translationally, activated by phosphorylation.

The enzyme catalyses alpha-D-glucosamine 1-phosphate = D-glucosamine 6-phosphate. In terms of biological role, catalyzes the conversion of glucosamine-6-phosphate to glucosamine-1-phosphate. This chain is Phosphoglucosamine mutase, found in Campylobacter lari (strain RM2100 / D67 / ATCC BAA-1060).